Consider the following 127-residue polypeptide: Large ribosomal subunit protein bL12 (127 aa).

The interval 93–127 (LVDEAPNPVSEGVSREEADDLKAQIEDAGGEVELQ) is disordered. Over residues 105 to 117 (VSREEADDLKAQI) the composition is skewed to basic and acidic residues.

Belongs to the bacterial ribosomal protein bL12 family. As to quaternary structure, homodimer. Part of the ribosomal stalk of the 50S ribosomal subunit. Forms a multimeric L10(L12)X complex, where L10 forms an elongated spine to which 2 to 4 L12 dimers bind in a sequential fashion. Binds GTP-bound translation factors.

In terms of biological role, forms part of the ribosomal stalk which helps the ribosome interact with GTP-bound translation factors. Is thus essential for accurate translation. The polypeptide is Large ribosomal subunit protein bL12 (Salinibacter ruber (strain DSM 13855 / M31)).